Consider the following 268-residue polypeptide: Aliphatic sulfonates import ATP-binding protein SsuB (268 aa).

The ABC transporter domain occupies 15-236 (LAVRNLQKTF…VRGSHRLAAL (222 aa)). 47-54 (GRSGCGKS) contacts ATP.

The protein belongs to the ABC transporter superfamily. Aliphatic sulfonates importer (TC 3.A.1.17.2) family. As to quaternary structure, the complex is composed of two ATP-binding proteins (SsuB), two transmembrane proteins (SsuC) and a solute-binding protein (SsuA).

Its subcellular location is the cell inner membrane. The catalysed reaction is ATP + H2O + aliphatic sulfonate-[sulfonate-binding protein]Side 1 = ADP + phosphate + aliphatic sulfonateSide 2 + [sulfonate-binding protein]Side 1.. Part of the ABC transporter complex SsuABC involved in aliphatic sulfonates import. Responsible for energy coupling to the transport system. This is Aliphatic sulfonates import ATP-binding protein SsuB from Pseudomonas fluorescens (strain Pf0-1).